We begin with the raw amino-acid sequence, 347 residues long: Eukaryotic translation initiation factor 3 subunit H (347 aa).

One can recognise an MPN domain in the interval 1–142 (MKIMKHCSQT…LRAFRLSPRF (142 aa)).

It belongs to the eIF-3 subunit H family. Component of the eukaryotic translation initiation factor 3 (eIF-3) complex.

Its subcellular location is the cytoplasm. Its function is as follows. Component of the eukaryotic translation initiation factor 3 (eIF-3) complex, which is involved in protein synthesis of a specialized repertoire of mRNAs and, together with other initiation factors, stimulates binding of mRNA and methionyl-tRNAi to the 40S ribosome. The eIF-3 complex specifically targets and initiates translation of a subset of mRNAs involved in cell proliferation. This is Eukaryotic translation initiation factor 3 subunit H from Neosartorya fischeri (strain ATCC 1020 / DSM 3700 / CBS 544.65 / FGSC A1164 / JCM 1740 / NRRL 181 / WB 181) (Aspergillus fischerianus).